A 141-amino-acid chain; its full sequence is Auxin-responsive protein SAUR62 (141 aa).

It belongs to the ARG7 family. In terms of tissue distribution, expressed in stamen filaments and petals.

The protein resides in the cell membrane. Its function is as follows. May promote auxin-stimulated organ elongation, such as hypocotyls, stamen filaments and petals. In Arabidopsis thaliana (Mouse-ear cress), this protein is Auxin-responsive protein SAUR62.